We begin with the raw amino-acid sequence, 524 residues long: B3 domain-containing protein Os07g0183700 (524 aa).

2 disordered regions span residues 94–152 (DGEG…TSVS) and 191–232 (PLQP…FQTQ). Residues 100–109 (CAPPPSPIPA) are compositionally biased toward pro residues. Low complexity-rich tracts occupy residues 110 to 124 (GPASSTVSAASSAPA) and 200 to 232 (AAAAAGSPSATTPEPGHGEATPTTSSSAQFQTQ). A DNA-binding region (TF-B3) is located at residues 336 to 434 (SFVKPLTYTD…EMFMAVRRTR (99 aa)).

The protein resides in the nucleus. The polypeptide is B3 domain-containing protein Os07g0183700 (Oryza sativa subsp. japonica (Rice)).